Reading from the N-terminus, the 180-residue chain is Regulator of G-protein signaling 8 (180 aa).

S26 bears the Phosphoserine mark. Residues 56 to 171 form the RGS domain; sequence SFDVLLSHKY…FLRSKMYLDL (116 aa).

As to quaternary structure, interacts with GNAO1. Interacts with GNAI3.

Its subcellular location is the cell membrane. The protein localises to the membrane. The protein resides in the perikaryon. It localises to the cell projection. It is found in the dendrite. Its subcellular location is the nucleus. In terms of biological role, regulates G protein-coupled receptor signaling cascades, including signaling via muscarinic acetylcholine receptor CHRM2 and dopamine receptor DRD2. Inhibits signal transduction by increasing the GTPase activity of G protein alpha subunits, thereby driving them into their inactive GDP-bound form. Modulates the activity of potassium channels that are activated in response to DRD2 and CHRM2 signaling. In Homo sapiens (Human), this protein is Regulator of G-protein signaling 8 (RGS8).